Consider the following 182-residue polypeptide: MKNNSVKIVVATGIGAALFVIIGWLINIPTPIPNTSIQLQYAVLALFSALFGPLAGFLIGFIGHALKDSFLYGAPWWTWVLGSGLMGLFLGFGVKRESLTQGIFGNKEIIRFNIVQFLANVVVWGLIAPIGDILVYSEPANKVFTQGVVAGLVNALTIAVAGTLLLKLYAATRTKSGTLDKE.

Transmembrane regions (helical) follow at residues 8 to 28 (IVVATGIGAALFVIIGWLINI), 42 to 62 (AVLALFSALFGPLAGFLIGFI), 74 to 94 (APWWTWVLGSGLMGLFLGFGV), 114 to 134 (IVQFLANVVVWGLIAPIGDIL), and 146 to 166 (QGVVAGLVNALTIAVAGTLLL).

This sequence belongs to the UPF0397 family.

The protein resides in the cell membrane. This chain is UPF0397 protein llmg_0343, found in Lactococcus lactis subsp. cremoris (strain MG1363).